The primary structure comprises 2042 residues: Cell adhesion molecule DSCAML1 (2042 aa).

The N-terminal stretch at 1-17 is a signal peptide; sequence MWLVTFFLLYSLRKAHT. Residues 18–1592 are Extracellular-facing; it reads EDVGTSLYFV…AQGEGDDVKK (1575 aa). N-linked (GlcNAc...) asparagine glycosylation is found at N28 and N78. Ig-like C2-type domains follow at residues 37 to 107, 114 to 216, 227 to 311, 315 to 403, 409 to 502, 507 to 587, 597 to 686, 691 to 785, and 789 to 886; these read SSTV…AENS, PNIR…ARLS, PTML…GTLT, PLRV…SIIT, PRIV…ARIN, PSIR…LSIS, PPLI…RQLI, PRFV…MFLT, and PAMI…LTVQ. Cystine bridges form between C46-C102, C145-C197, C248-C295, C337-C387, and C430-C486. N-linked (GlcNAc...) asparagine glycosylation is found at N369, N472, N514, N557, N667, N711, N750, N797, and N810. Cystine bridges form between C527–C576 and C618–C670. C712 and C768 form a disulfide bridge. An intrachain disulfide couples C811 to C868. Fibronectin type-III domains lie at 888-985, 990-1089, 1094-1190, and 1194-1289; these read PPDP…TEEA, PPMD…TLED, PPEN…TKED, and PPAG…AGKA. Residues N927, N1083, N1145, N1163, N1276, and N1346 are each glycosylated (N-linked (GlcNAc...) asparagine). Residues 1279-1368 form the Ig-like C2-type 10 domain; the sequence is EKVTIEPAGK…SGYYTCTATN (90 aa). An intrachain disulfide couples C1312 to C1364. 2 Fibronectin type-III domains span residues 1384–1478 and 1479–1579; these read PPDQ…THGR and EPSF…TIPP. N-linked (GlcNAc...) asparagine glycans are attached at residues N1493, N1532, and N1562. Residues 1593-1613 form a helical membrane-spanning segment; it reads LFTIACPIILATLGVALLFII. At 1614 to 2042 the chain is on the cytoplasmic side; that stretch reads RKKRKEKRLK…GAYSKSYTLV (429 aa). 4 disordered regions span residues 1716-1742, 1781-1805, 1841-1865, and 1940-2042; these read PLIDMSDIRPGTNPVSRKSVKSAHSTR, SDSYSASLSQDTDKGRNSMVSTESA, SSDQMTTGTTDNADSMTSMSTPSEP, and PPAR…YTLV. A compositionally biased stretch (basic residues) spans 1733 to 1742; it reads KSVKSAHSTR. 2 stretches are compositionally biased toward polar residues: residues 1781-1790 and 1841-1863; these read SDSYSASLSQ and SSDQMTTGTTDNADSMTSMSTPS. Residues 1951 to 1960 are compositionally biased toward pro residues; sequence AKPPGLPPPS. A compositionally biased stretch (low complexity) spans 1961-1983; sequence SSSSSTTLPQRTLPMPTAASTAP. Over residues 1984–1995 the composition is skewed to pro residues; the sequence is APAPAPAAPAEP. Low complexity-rich tracts occupy residues 1996 to 2005 and 2023 to 2034; these read PANTTTTTTT and GAGRAQKQGAGA.

In terms of assembly, homodimer; mediates homophilic interactions to promote cell adhesion. SDK1, SDK2, DSCAM and DSCAML1 are expressed in non-overlapping subsets of interneurons and retinal ganglion cells (RGCs) that form synapses in distinct inner plexiform layer (IPL) sublaminae.

The protein localises to the cell membrane. It is found in the synapse. Cell adhesion molecule that plays a role in neuronal self-avoidance. Promotes repulsion between specific neuronal processes of either the same cell or the same subtype of cells. Adhesion molecule that promotes lamina-specific synaptic connections in the retina: expressed in specific subsets of interneurons and retinal ganglion cells (RGCs) and promotes synaptic connectivity via homophilic interactions. This Gallus gallus (Chicken) protein is Cell adhesion molecule DSCAML1 (DSCAML1).